The chain runs to 151 residues: MLKGFKEFLSRGNIVDLAVAVVIGTAFTALVTRFTDSIITPLINRVGVNEQSDLGILKIGIGRGQSIDLNVLLSATINFILVAGVVYFLVVVPYNTLRKKGEVEQADDAQIVLLTEIRDLLAQTNSNSSGRHEAPGTAGTPPPNYGPRADT.

The next 2 membrane-spanning stretches (helical) occupy residues 12–32 and 71–91; these read GNIV…ALVT and VLLS…FLVV. The segment at 125 to 151 is disordered; it reads NSNSSGRHEAPGTAGTPPPNYGPRADT.

The protein belongs to the MscL family. Homopentamer.

It localises to the cell membrane. In terms of biological role, channel that opens in response to stretch forces in the membrane lipid bilayer. May participate in the regulation of osmotic pressure changes within the cell. The sequence is that of Large-conductance mechanosensitive channel from Mycobacterium ulcerans (strain Agy99).